A 346-amino-acid polypeptide reads, in one-letter code: DNA-directed RNA polymerases I and III subunit RPAC1 (346 aa).

N-acetylalanine is present on Ala2.

It belongs to the archaeal Rpo3/eukaryotic RPB3 RNA polymerase subunit family. In terms of assembly, component of the RNA polymerase I and RNA polymerase III complexes consisting of at least 13 and 17 subunits, respectively. Pol I complex consists of a ten-subunit catalytic core composed of POLR1A/RPA1, POLR1B/RPA2, POLR1C/RPAC1, POLR1D/RPAC2, POLR1H/RPA12, POLR2E/RPABC1, POLR2F/RPABC2, POLR2H/RPABC3, POLR2K/RPABC4 and POLR2L/RPABC5; a mobile stalk subunit POLR1F/RPA43 protruding from the core and additional subunits homologous to general transcription factors POLR1E/RPA49 and POLR1G/RPA34. Part of Pol I pre-initiation complex (PIC), in which Pol I core assembles with RRN3 and promoter-bound UTBF and SL1/TIF-IB complex. Pol III complex consists of a ten-subunit catalytic core composed of POLR3A/RPC1, POLR3B/RPC2, POLR1C/RPAC1, POLR1D/RPAC2, POLR3K/RPC10, POLR2E/RPABC1, POLR2F/RPABC2, POLR2H/RPABC3, POLR2K/RPABC4 and POLR2L/RPABC5; a mobile stalk composed of two subunits POLR3H/RPC8 and CRCP/RPC9, protruding from the core and functioning primarily in transcription initiation; and additional subunits homologous to general transcription factors of the RNA polymerase II machinery, POLR3C/RPC3-POLR3F/RPC6-POLR3G/RPC7 heterotrimer required for transcription initiation and POLR3D/RPC4-POLR3E/RPC5 heterodimer involved in both transcription initiation and termination.

The protein localises to the nucleus. The protein resides in the cytoplasm. It localises to the cytosol. DNA-dependent RNA polymerase catalyzes the transcription of DNA into RNA using the four ribonucleoside triphosphates as substrates. Common component of RNA polymerases I and III which synthesize ribosomal RNA precursors and short non-coding RNAs including 5S rRNA, snRNAs, tRNAs and miRNAs, respectively. POLR1C/RPAC1 is part of the polymerase core and may function as a clamp element that moves to open and close the cleft. This is DNA-directed RNA polymerases I and III subunit RPAC1 from Mus musculus (Mouse).